We begin with the raw amino-acid sequence, 197 residues long: Adenylyl-sulfate kinase (197 aa).

An ATP-binding site is contributed by 33–40 (GLSGSGKS). The active-site Phosphoserine intermediate is Ser107.

It belongs to the APS kinase family.

It catalyses the reaction adenosine 5'-phosphosulfate + ATP = 3'-phosphoadenylyl sulfate + ADP + H(+). It functions in the pathway sulfur metabolism; hydrogen sulfide biosynthesis; sulfite from sulfate: step 2/3. Functionally, catalyzes the synthesis of activated sulfate. The chain is Adenylyl-sulfate kinase from Bacillus velezensis (strain DSM 23117 / BGSC 10A6 / LMG 26770 / FZB42) (Bacillus amyloliquefaciens subsp. plantarum).